Reading from the N-terminus, the 660-residue chain is Protein translocase subunit SecA 2 (660 aa).

ATP contacts are provided by residues Gln-113, 131–135, and Asp-539; that span reads GEGKT.

Belongs to the SecA family. In terms of assembly, monomer and homodimer. Part of the essential Sec protein translocation apparatus which comprises SecA, SecYEG and auxiliary proteins SecDF-YajC and YidC.

The protein resides in the cell inner membrane. It is found in the cytoplasm. The catalysed reaction is ATP + H2O + cellular proteinSide 1 = ADP + phosphate + cellular proteinSide 2.. In terms of biological role, part of the Sec protein translocase complex. Interacts with the SecYEG preprotein conducting channel. Has a central role in coupling the hydrolysis of ATP to the transfer of proteins into and across the cell membrane, serving both as a receptor for the preprotein-SecB complex and as an ATP-driven molecular motor driving the stepwise translocation of polypeptide chains across the membrane. This chain is Protein translocase subunit SecA 2, found in Bordetella avium (strain 197N).